Here is a 411-residue protein sequence, read N- to C-terminus: Serine--tRNA ligase (411 aa).

226–228 (TSE) is an L-serine binding site. 257–259 (RKE) serves as a coordination point for ATP. E280 is a binding site for L-serine. 344–347 (EISS) lines the ATP pocket. Residue S379 coordinates L-serine.

It belongs to the class-II aminoacyl-tRNA synthetase family. Type-1 seryl-tRNA synthetase subfamily. Homodimer. The tRNA molecule binds across the dimer.

Its subcellular location is the cytoplasm. It catalyses the reaction tRNA(Ser) + L-serine + ATP = L-seryl-tRNA(Ser) + AMP + diphosphate + H(+). It carries out the reaction tRNA(Sec) + L-serine + ATP = L-seryl-tRNA(Sec) + AMP + diphosphate + H(+). It functions in the pathway aminoacyl-tRNA biosynthesis; selenocysteinyl-tRNA(Sec) biosynthesis; L-seryl-tRNA(Sec) from L-serine and tRNA(Sec): step 1/1. Catalyzes the attachment of serine to tRNA(Ser). Is also able to aminoacylate tRNA(Sec) with serine, to form the misacylated tRNA L-seryl-tRNA(Sec), which will be further converted into selenocysteinyl-tRNA(Sec). The sequence is that of Serine--tRNA ligase from Campylobacter jejuni subsp. jejuni serotype O:6 (strain 81116 / NCTC 11828).